Consider the following 330-residue polypeptide: Malate dehydrogenase (330 aa).

13 to 19 (GAAGQIG) is a binding site for NAD(+). The substrate site is built by arginine 94 and arginine 100. NAD(+) is bound by residues asparagine 107, glutamine 114, and 131-133 (VGN). The substrate site is built by asparagine 133 and arginine 164. Histidine 189 serves as the catalytic Proton acceptor.

Belongs to the LDH/MDH superfamily. MDH type 2 family.

It catalyses the reaction (S)-malate + NAD(+) = oxaloacetate + NADH + H(+). Functionally, catalyzes the reversible oxidation of malate to oxaloacetate. This Deinococcus deserti (strain DSM 17065 / CIP 109153 / LMG 22923 / VCD115) protein is Malate dehydrogenase.